Consider the following 294-residue polypeptide: Fructose-bisphosphate aldolase class 1 (294 aa).

The Proton acceptor role is filled by Glu176. The Schiff-base intermediate with dihydroxyacetone-P role is filled by Lys213.

Belongs to the class I fructose-bisphosphate aldolase family.

It catalyses the reaction beta-D-fructose 1,6-bisphosphate = D-glyceraldehyde 3-phosphate + dihydroxyacetone phosphate. Its pathway is carbohydrate degradation; glycolysis; D-glyceraldehyde 3-phosphate and glycerone phosphate from D-glucose: step 4/4. The chain is Fructose-bisphosphate aldolase class 1 from Oceanobacillus iheyensis (strain DSM 14371 / CIP 107618 / JCM 11309 / KCTC 3954 / HTE831).